A 142-amino-acid chain; its full sequence is Large ribosomal subunit protein uL11 (142 aa).

It belongs to the universal ribosomal protein uL11 family. Part of the ribosomal stalk of the 50S ribosomal subunit. Interacts with L10 and the large rRNA to form the base of the stalk. L10 forms an elongated spine to which L12 dimers bind in a sequential fashion forming a multimeric L10(L12)X complex. In terms of processing, one or more lysine residues are methylated.

Functionally, forms part of the ribosomal stalk which helps the ribosome interact with GTP-bound translation factors. The protein is Large ribosomal subunit protein uL11 of Pectobacterium carotovorum subsp. carotovorum (strain PC1).